We begin with the raw amino-acid sequence, 325 residues long: Tagatose 1,6-diphosphate aldolase 1 (325 aa).

It belongs to the aldolase LacD family.

The enzyme catalyses D-tagatofuranose 1,6-bisphosphate = D-glyceraldehyde 3-phosphate + dihydroxyacetone phosphate. It participates in carbohydrate metabolism; D-tagatose 6-phosphate degradation; D-glyceraldehyde 3-phosphate and glycerone phosphate from D-tagatose 6-phosphate: step 2/2. This chain is Tagatose 1,6-diphosphate aldolase 1 (lacD1), found in Streptococcus pyogenes serotype M3 (strain ATCC BAA-595 / MGAS315).